We begin with the raw amino-acid sequence, 241 residues long: Pyridoxine 5'-phosphate synthase (241 aa).

Asn-10 contacts 3-amino-2-oxopropyl phosphate. Residue 12–13 (DH) coordinates 1-deoxy-D-xylulose 5-phosphate. Position 21 (Arg-21) interacts with 3-amino-2-oxopropyl phosphate. Residue His-48 is the Proton acceptor of the active site. Residues Arg-50 and His-55 each contribute to the 1-deoxy-D-xylulose 5-phosphate site. Glu-75 acts as the Proton acceptor in catalysis. Thr-105 contacts 1-deoxy-D-xylulose 5-phosphate. His-195 functions as the Proton donor in the catalytic mechanism. 3-amino-2-oxopropyl phosphate-binding positions include Gly-196 and 217–218 (GH).

The protein belongs to the PNP synthase family. In terms of assembly, homooctamer; tetramer of dimers.

It is found in the cytoplasm. It catalyses the reaction 3-amino-2-oxopropyl phosphate + 1-deoxy-D-xylulose 5-phosphate = pyridoxine 5'-phosphate + phosphate + 2 H2O + H(+). It functions in the pathway cofactor biosynthesis; pyridoxine 5'-phosphate biosynthesis; pyridoxine 5'-phosphate from D-erythrose 4-phosphate: step 5/5. Its function is as follows. Catalyzes the complicated ring closure reaction between the two acyclic compounds 1-deoxy-D-xylulose-5-phosphate (DXP) and 3-amino-2-oxopropyl phosphate (1-amino-acetone-3-phosphate or AAP) to form pyridoxine 5'-phosphate (PNP) and inorganic phosphate. The protein is Pyridoxine 5'-phosphate synthase of Bdellovibrio bacteriovorus (strain ATCC 15356 / DSM 50701 / NCIMB 9529 / HD100).